The chain runs to 94 residues: Small ribosomal subunit protein bS18 (94 aa).

This sequence belongs to the bacterial ribosomal protein bS18 family. As to quaternary structure, part of the 30S ribosomal subunit. Forms a tight heterodimer with protein bS6.

Binds as a heterodimer with protein bS6 to the central domain of the 16S rRNA, where it helps stabilize the platform of the 30S subunit. This Leptothrix cholodnii (strain ATCC 51168 / LMG 8142 / SP-6) (Leptothrix discophora (strain SP-6)) protein is Small ribosomal subunit protein bS18.